Here is a 322-residue protein sequence, read N- to C-terminus: Adenine deaminase (322 aa).

His11, His13, and His189 together coordinate Zn(2+). The Proton donor role is filled by Glu192. Residue Asp270 coordinates Zn(2+). A substrate-binding site is contributed by Asp271.

Belongs to the metallo-dependent hydrolases superfamily. Adenosine and AMP deaminases family. Adenine deaminase type 2 subfamily. It depends on Zn(2+) as a cofactor.

The enzyme catalyses adenine + H2O + H(+) = hypoxanthine + NH4(+). Functionally, catalyzes the hydrolytic deamination of adenine to hypoxanthine. Plays an important role in the purine salvage pathway and in nitrogen catabolism. This is Adenine deaminase from Rhizobium johnstonii (strain DSM 114642 / LMG 32736 / 3841) (Rhizobium leguminosarum bv. viciae).